Here is a 158-residue protein sequence, read N- to C-terminus: Endoribonuclease YbeY (158 aa).

Zn(2+) contacts are provided by histidine 119, histidine 123, and aspartate 129.

Belongs to the endoribonuclease YbeY family. Requires Zn(2+) as cofactor.

Its subcellular location is the cytoplasm. Functionally, single strand-specific metallo-endoribonuclease involved in late-stage 70S ribosome quality control and in maturation of the 3' terminus of the 16S rRNA. The protein is Endoribonuclease YbeY of Chlamydia caviae (strain ATCC VR-813 / DSM 19441 / 03DC25 / GPIC) (Chlamydophila caviae).